A 257-amino-acid chain; its full sequence is Dihydroorotate dehydrogenase B (NAD(+)), electron transfer subunit (257 aa).

The FAD-binding FR-type domain maps to 2 to 101; the sequence is IRQEKMRVVS…LGPIGNGFPV (100 aa). FAD-binding positions include 52-55, 69-71, and 76-77; these read RPIS, IYR, and GT. [2Fe-2S] cluster contacts are provided by Cys-220, Cys-225, Cys-228, and Cys-244.

This sequence belongs to the PyrK family. Heterotetramer of 2 PyrK and 2 PyrD type B subunits. [2Fe-2S] cluster serves as cofactor. FAD is required as a cofactor.

Its pathway is pyrimidine metabolism; UMP biosynthesis via de novo pathway; orotate from (S)-dihydroorotate (NAD(+) route): step 1/1. In terms of biological role, responsible for channeling the electrons from the oxidation of dihydroorotate from the FMN redox center in the PyrD type B subunit to the ultimate electron acceptor NAD(+). The chain is Dihydroorotate dehydrogenase B (NAD(+)), electron transfer subunit from Lysinibacillus sphaericus (strain C3-41).